The sequence spans 152 residues: Vasotocin-neurophysin VT 1 (152 aa).

The N-terminal stretch at 1–19 (MSDSFLPTCILCLLALSSA) is a signal peptide. A disulfide bridge connects residues Cys20 and Cys25. Glycine amide is present on Gly28. Disulfide bonds link Cys40/Cys84, Cys43/Cys57, Cys51/Cys74, Cys58/Cys64, Cys91/Cys103, Cys97/Cys115, and Cys104/Cys109.

The protein belongs to the vasopressin/oxytocin family.

The protein localises to the secreted. Functionally, vasotocin is an antidiuretic hormone. The chain is Vasotocin-neurophysin VT 1 from Catostomus commersonii (White sucker).